Reading from the N-terminus, the 334-residue chain is GTPase Obg (334 aa).

An Obg domain is found at 1–159 (MKFVDSASVR…REIGLELSVM (159 aa)). Residues 160 to 332 (ADIGLLGIPN…LVAGLFKLVL (173 aa)) enclose the OBG-type G domain. GTP is bound by residues 166–173 (GIPNAGKS), 191–195 (FTTLH), 212–215 (DIPG), 282–285 (NKID), and 313–315 (SAL). Mg(2+) contacts are provided by Ser173 and Thr193.

Belongs to the TRAFAC class OBG-HflX-like GTPase superfamily. OBG GTPase family. Monomer. It depends on Mg(2+) as a cofactor.

It localises to the cytoplasm. In terms of biological role, an essential GTPase which binds GTP, GDP and possibly (p)ppGpp with moderate affinity, with high nucleotide exchange rates and a fairly low GTP hydrolysis rate. Plays a role in control of the cell cycle, stress response, ribosome biogenesis and in those bacteria that undergo differentiation, in morphogenesis control. In Vesicomyosocius okutanii subsp. Calyptogena okutanii (strain HA), this protein is GTPase Obg.